The sequence spans 105 residues: Cuticle protein AMP4 (105 aa).

The segment at 1-21 (DRDAQTLTDERNDQGDGNFRY) is disordered. The Chitin-binding type R&amp;R domain occupies 16–81 (DGNFRYEFET…PSSDLLPVGP (66 aa)).

In terms of tissue distribution, arthrodial membrane.

The protein is Cuticle protein AMP4 of Homarus americanus (American lobster).